A 409-amino-acid polypeptide reads, in one-letter code: LL-diaminopimelate aminotransferase (409 aa).

Substrate-binding residues include Tyr-15 and Gly-42. Residues Tyr-72, 108–109, Tyr-132, Asn-187, Tyr-218, and 246–248 contribute to the pyridoxal 5'-phosphate site; these read SK and SFS. Substrate-binding residues include Lys-109, Tyr-132, and Asn-187. Lys-249 is modified (N6-(pyridoxal phosphate)lysine). The pyridoxal 5'-phosphate site is built by Arg-257 and Asn-292. Residues Asn-292 and Arg-388 each coordinate substrate.

It belongs to the class-I pyridoxal-phosphate-dependent aminotransferase family. LL-diaminopimelate aminotransferase subfamily. As to quaternary structure, homodimer. Pyridoxal 5'-phosphate serves as cofactor.

It carries out the reaction (2S,6S)-2,6-diaminopimelate + 2-oxoglutarate = (S)-2,3,4,5-tetrahydrodipicolinate + L-glutamate + H2O + H(+). It functions in the pathway amino-acid biosynthesis; L-lysine biosynthesis via DAP pathway; LL-2,6-diaminopimelate from (S)-tetrahydrodipicolinate (aminotransferase route): step 1/1. Functionally, involved in the synthesis of meso-diaminopimelate (m-DAP or DL-DAP), required for both lysine and peptidoglycan biosynthesis. Catalyzes the direct conversion of tetrahydrodipicolinate to LL-diaminopimelate. The protein is LL-diaminopimelate aminotransferase of Acaryochloris marina (strain MBIC 11017).